The chain runs to 368 residues: Quinolinate synthase (368 aa).

Iminosuccinate contacts are provided by histidine 46 and serine 63. Cysteine 110 serves as a coordination point for [4Fe-4S] cluster. Iminosuccinate-binding positions include 141 to 143 (YVN) and serine 162. Cysteine 230 provides a ligand contact to [4Fe-4S] cluster. Residues 256-258 (HPE) and threonine 273 each bind iminosuccinate. Position 320 (cysteine 320) interacts with [4Fe-4S] cluster.

This sequence belongs to the quinolinate synthase family. Type 3 subfamily. Requires [4Fe-4S] cluster as cofactor.

Its subcellular location is the cytoplasm. It catalyses the reaction iminosuccinate + dihydroxyacetone phosphate = quinolinate + phosphate + 2 H2O + H(+). It functions in the pathway cofactor biosynthesis; NAD(+) biosynthesis; quinolinate from iminoaspartate: step 1/1. Functionally, catalyzes the condensation of iminoaspartate with dihydroxyacetone phosphate to form quinolinate. This Bacillus thuringiensis subsp. konkukian (strain 97-27) protein is Quinolinate synthase.